A 302-amino-acid polypeptide reads, in one-letter code: Bacteriochlorophyll synthase 33 kDa chain (302 aa).

9 consecutive transmembrane segments (helical) span residues 25–45 (ITWF…GIWP), 49–69 (WPLV…MSQA), 97–117 (WGLY…WMLG), 119–139 (WGFG…VEPI), 145–165 (GWWG…FTGA), 166–186 (AVLS…LYAF), 223–243 (LACT…VIWG), 246–266 (IHAG…RVLL), and 275–295 (WYNG…AFAI).

The protein localises to the cell membrane. It functions in the pathway porphyrin-containing compound metabolism; bacteriochlorophyll biosynthesis (light-independent). In terms of biological role, catalyzes the esterification of bacteriochlorophyllide a by geranylgeraniol-PPi. The chain is Bacteriochlorophyll synthase 33 kDa chain (bchG) from Cereibacter sphaeroides (strain ATCC 17023 / DSM 158 / JCM 6121 / CCUG 31486 / LMG 2827 / NBRC 12203 / NCIMB 8253 / ATH 2.4.1.) (Rhodobacter sphaeroides).